Reading from the N-terminus, the 272-residue chain is Shikimate dehydrogenase (NADP(+)) (272 aa).

Shikimate-binding positions include 14–16 and Thr-61; that span reads SKS. The active-site Proton acceptor is the Lys-65. Glu-77 provides a ligand contact to NADP(+). Residues Asn-86 and Asp-102 each coordinate shikimate. NADP(+)-binding positions include 126 to 130, 149 to 154, and Met-213; these read GAGGA and NRTVSR. Residue Tyr-215 participates in shikimate binding. NADP(+) is bound at residue Gly-237.

The protein belongs to the shikimate dehydrogenase family. In terms of assembly, homodimer.

It catalyses the reaction shikimate + NADP(+) = 3-dehydroshikimate + NADPH + H(+). The protein operates within metabolic intermediate biosynthesis; chorismate biosynthesis; chorismate from D-erythrose 4-phosphate and phosphoenolpyruvate: step 4/7. Functionally, involved in the biosynthesis of the chorismate, which leads to the biosynthesis of aromatic amino acids. Catalyzes the reversible NADPH linked reduction of 3-dehydroshikimate (DHSA) to yield shikimate (SA). The polypeptide is Shikimate dehydrogenase (NADP(+)) (Escherichia coli O45:K1 (strain S88 / ExPEC)).